The sequence spans 144 residues: Galectin a (144 aa).

Residues 1 to 138 (DHIDLEFDVG…DAVLRKLCVV (138 aa)) form the Galectin domain.

Tetramer.

In terms of biological role, lectin that binds beta-galactoside and a wide array of complex carbohydrates. The chain is Galectin a from Aplysina lactuca (Marine sponge).